The chain runs to 347 residues: 4-hydroxy-2-oxovalerate aldolase (347 aa).

Residues 2–252 (ILISDATLRD…DTRTTFEHVM (251 aa)) enclose the Pyruvate carboxyltransferase domain. 10–11 (RD) provides a ligand contact to substrate. Aspartate 11 lines the Mn(2+) pocket. Histidine 14 serves as the catalytic Proton acceptor. Substrate is bound by residues serine 164 and histidine 191. Mn(2+) is bound by residues histidine 191 and histidine 193.

It belongs to the 4-hydroxy-2-oxovalerate aldolase family.

The catalysed reaction is (S)-4-hydroxy-2-oxopentanoate = acetaldehyde + pyruvate. The sequence is that of 4-hydroxy-2-oxovalerate aldolase (mhpE) from Burkholderia thailandensis (strain ATCC 700388 / DSM 13276 / CCUG 48851 / CIP 106301 / E264).